We begin with the raw amino-acid sequence, 1256 residues long: Topoisomerase 1-associated factor 1 (1256 aa).

A compositionally biased stretch (acidic residues) spans Gly26–Glu38. 4 disordered regions span residues Gly26–Tyr58, Ser695–Ala725, Ser1052–Phe1121, and Ser1176–Glu1256. Over residues Asn39–Asp53 the composition is skewed to basic and acidic residues. Positions Gly1060 to Pro1086 are enriched in basic residues. 2 stretches are compositionally biased toward basic and acidic residues: residues Glu1097–Asp1110 and Val1179–Gln1190. Acidic residues predominate over residues Ser1194–Ser1204. Over residues Asp1222 to Ser1231 the composition is skewed to low complexity.

The protein belongs to the timeless family. In terms of assembly, component of the fork protection complex (FPC) consisting of TOF1 and CSM3.

The protein localises to the nucleus. Functionally, forms a fork protection complex (FPC) with CSM3 and which is required for chromosome segregation during meiosis and DNA damage repair. FPC coordinates leading and lagging strand synthesis and moves with the replication fork. FPC stabilizes replication forks in a configuration that is recognized by replication checkpoint sensors. This Scheffersomyces stipitis (strain ATCC 58785 / CBS 6054 / NBRC 10063 / NRRL Y-11545) (Yeast) protein is Topoisomerase 1-associated factor 1 (TOF1).